Here is a 145-residue protein sequence, read N- to C-terminus: Cuticle protein 7 (145 aa).

One can recognise a Chitin-binding type R&amp;R domain in the interval 41-114 (PVNVATSYHA…VASNALPVGP (74 aa)).

This chain is Cuticle protein 7, found in Blaberus craniifer (Death's head cockroach).